The primary structure comprises 132 residues: Small ribosomal subunit protein uS8 (132 aa).

It belongs to the universal ribosomal protein uS8 family. Part of the 30S ribosomal subunit. Contacts proteins S5 and S12.

Its function is as follows. One of the primary rRNA binding proteins, it binds directly to 16S rRNA central domain where it helps coordinate assembly of the platform of the 30S subunit. This chain is Small ribosomal subunit protein uS8, found in Sinorhizobium fredii (strain NBRC 101917 / NGR234).